Here is a 286-residue protein sequence, read N- to C-terminus: Main hemagglutinin component type C (286 aa).

The stretch at S2–N55 is one 1-alpha repeat. Ricin B-type lectin domains are found at residues N12 to S140 and D180 to N284. Residues K56 to I100 form a 1-beta repeat. A 1-gamma repeat occupies S101–N148. The 2-alpha repeat unit spans residues N149–T193. The sugar-binding site 1 stretch occupies residues N167 to R183. The 2-beta repeat unit spans residues K194–D239. A 2-gamma repeat occupies A240–I286. Positions D256–Q279 are sugar-binding site 2.

As to quaternary structure, botulinum toxins are produced as progenitor toxins of large molecular sizes of 12S (M toxin) and 16S (L toxin). M toxin consists of a non-toxic, non-hemagglutinin component (NTNHA) and the neurotoxin. L toxin consists of the M toxin and the 3 subcomponents of hemagglutinin (HA). HA is composed of subcomponents of 70, 33, and 17 kDa. The 70 kDa subcomponent undergoes proteolytic processing and is split into HA-55 (also called HA-53 and HA3b) and HA-22-23 (also called HA3a). The stoichiometry of the whole complex has been modeled as one BoNT/C, one NTNHA, three HA-70, six HA-33 and three HA-17.

The protein resides in the secreted. In terms of biological role, agglutinates human erythrocytes. The hemagglutinin (HA) component of the progenitor toxin protects the structural integrity of botulinum neurotoxin; may increase internalization of the neurotoxin into the bloodstream of the host. The hemagglutinin (HA) component is involved in binding to the upper small intestine through interactions with glycolipids and glycoproteins containing sialic acid moieties. Binds galactose or oligosaccharides with galactose at their non-reducing end. Binds eukaryotic host mucins; binding is inhibited by N-acetyl-beta-neuraminic acid, N-acetyl-D-galactosamine, galactose, and methyl N-acetyl-beta-neuraminic acid. Binds N-acetyl-beta-neuraminic acid, N-acetyl-D-galactosamine and galactose (but not glucose) via 2 sites. This is Main hemagglutinin component type C from Clostridium botulinum C (Clostridium botulinum C bacteriophage).